Reading from the N-terminus, the 130-residue chain is MSKLSSDELLDVFKEMTLLELSDFVKKFEETFEVTAAAPVSVAVAGAPAAGEAGEAAEEQSEFDVILESAGDKKIGVIKVVREIVSGLGLKEAKDLVDGVPKLLLEKVAKEAADDAKAKLEATGATVSVK.

This sequence belongs to the bacterial ribosomal protein bL12 family. In terms of assembly, homodimer. Part of the ribosomal stalk of the 50S ribosomal subunit. Forms a multimeric L10(L12)X complex, where L10 forms an elongated spine to which 2 to 4 L12 dimers bind in a sequential fashion. Binds GTP-bound translation factors.

In terms of biological role, forms part of the ribosomal stalk which helps the ribosome interact with GTP-bound translation factors. Is thus essential for accurate translation. The chain is Large ribosomal subunit protein bL12 from Mycobacterium leprae (strain TN).